Here is a 395-residue protein sequence, read N- to C-terminus: Elongation factor Tu (395 aa).

One can recognise a tr-type G domain in the interval 10–204 (KPHVNIGTIG…AIDNWIPLPQ (195 aa)). Residues 19–26 (GHVDHGKT) form a G1 region. GTP is bound at residue 19 to 26 (GHVDHGKT). Thr-26 is a Mg(2+) binding site. The tract at residues 60–64 (GITIN) is G2. The segment at 81–84 (DCPG) is G3. GTP-binding positions include 81–85 (DCPGH) and 136–139 (NKVD). Positions 136–139 (NKVD) are G4. The tract at residues 174–176 (SAL) is G5.

This sequence belongs to the TRAFAC class translation factor GTPase superfamily. Classic translation factor GTPase family. EF-Tu/EF-1A subfamily. Monomer.

Its subcellular location is the cytoplasm. It catalyses the reaction GTP + H2O = GDP + phosphate + H(+). Its function is as follows. GTP hydrolase that promotes the GTP-dependent binding of aminoacyl-tRNA to the A-site of ribosomes during protein biosynthesis. This Azobacteroides pseudotrichonymphae genomovar. CFP2 protein is Elongation factor Tu.